A 312-amino-acid chain; its full sequence is Methionyl-tRNA formyltransferase (312 aa).

107–110 (SLLP) serves as a coordination point for (6S)-5,6,7,8-tetrahydrofolate.

The protein belongs to the Fmt family.

The enzyme catalyses L-methionyl-tRNA(fMet) + (6R)-10-formyltetrahydrofolate = N-formyl-L-methionyl-tRNA(fMet) + (6S)-5,6,7,8-tetrahydrofolate + H(+). Attaches a formyl group to the free amino group of methionyl-tRNA(fMet). The formyl group appears to play a dual role in the initiator identity of N-formylmethionyl-tRNA by promoting its recognition by IF2 and preventing the misappropriation of this tRNA by the elongation apparatus. In Endomicrobium trichonymphae, this protein is Methionyl-tRNA formyltransferase.